The sequence spans 96 residues: Large ribosomal subunit protein uL23 (96 aa).

The protein belongs to the universal ribosomal protein uL23 family. In terms of assembly, part of the 50S ribosomal subunit. Contacts protein L29, and trigger factor when it is bound to the ribosome.

Functionally, one of the early assembly proteins it binds 23S rRNA. One of the proteins that surrounds the polypeptide exit tunnel on the outside of the ribosome. Forms the main docking site for trigger factor binding to the ribosome. This chain is Large ribosomal subunit protein uL23, found in Halalkalibacterium halodurans (strain ATCC BAA-125 / DSM 18197 / FERM 7344 / JCM 9153 / C-125) (Bacillus halodurans).